A 287-amino-acid polypeptide reads, in one-letter code: Thymidylate synthase (287 aa).

Residue R21 participates in dUMP binding. (6R)-5,10-methylene-5,6,7,8-tetrahydrofolate is bound at residue H51. 150–151 (RR) provides a ligand contact to dUMP. The active-site Nucleophile is the C170. DUMP contacts are provided by residues 190 to 193 (RSGD), N201, and 231 to 233 (HIY). Position 193 (D193) interacts with (6R)-5,10-methylene-5,6,7,8-tetrahydrofolate. A286 contacts (6R)-5,10-methylene-5,6,7,8-tetrahydrofolate.

It belongs to the thymidylate synthase family. Bacterial-type ThyA subfamily. In terms of assembly, homodimer.

It localises to the cytoplasm. It catalyses the reaction dUMP + (6R)-5,10-methylene-5,6,7,8-tetrahydrofolate = 7,8-dihydrofolate + dTMP. Its pathway is pyrimidine metabolism; dTTP biosynthesis. In terms of biological role, catalyzes the reductive methylation of 2'-deoxyuridine-5'-monophosphate (dUMP) to 2'-deoxythymidine-5'-monophosphate (dTMP) while utilizing 5,10-methylenetetrahydrofolate (mTHF) as the methyl donor and reductant in the reaction, yielding dihydrofolate (DHF) as a by-product. This enzymatic reaction provides an intracellular de novo source of dTMP, an essential precursor for DNA biosynthesis. This chain is Thymidylate synthase, found in Mycoplasma pneumoniae (strain ATCC 29342 / M129 / Subtype 1) (Mycoplasmoides pneumoniae).